The chain runs to 306 residues: Glutathione transport system permease protein GsiC (306 aa).

Over Met1–Arg8 the chain is Cytoplasmic. A helical membrane pass occupies residues Leu9–Met29. The Periplasmic portion of the chain corresponds to Leu30–Thr102. The region spanning Phe95–Val292 is the ABC transmembrane type-1 domain. A helical transmembrane segment spans residues Ile103–Trp123. Over Arg124–Thr134 the chain is Cytoplasmic. The chain crosses the membrane as a helical span at residues Ile135–Phe155. The Periplasmic segment spans residues Ser156–Asp168. Residues Ser169 to Ala189 traverse the membrane as a helical segment. The Cytoplasmic segment spans residues Arg190–Met228. A helical transmembrane segment spans residues Ile229 to Val249. Residues Glu250–Glu277 are Periplasmic-facing. A helical transmembrane segment spans residues Ile278 to Ala298. Residues Ile299–Lys306 lie on the Cytoplasmic side of the membrane.

It belongs to the binding-protein-dependent transport system permease family. In terms of assembly, the complex is composed of two ATP-binding proteins (GsiA), two transmembrane proteins (GsiC and GsiD) and a solute-binding protein (GsiB).

Its subcellular location is the cell inner membrane. Part of the ABC transporter complex GsiABCD involved in glutathione import. Probably responsible for the translocation of the substrate across the membrane. The polypeptide is Glutathione transport system permease protein GsiC (Escherichia coli O1:K1 / APEC).